A 295-amino-acid polypeptide reads, in one-letter code: Pyridoxal 5'-phosphate synthase subunit PdxS (295 aa).

Residue aspartate 25 participates in D-ribose 5-phosphate binding. Lysine 82 functions as the Schiff-base intermediate with D-ribose 5-phosphate in the catalytic mechanism. A D-ribose 5-phosphate-binding site is contributed by glycine 154. Arginine 166 provides a ligand contact to D-glyceraldehyde 3-phosphate. Residues glycine 215 and 236–237 contribute to the D-ribose 5-phosphate site; that span reads GS.

The protein belongs to the PdxS/SNZ family. In terms of assembly, in the presence of PdxT, forms a dodecamer of heterodimers.

The catalysed reaction is aldehydo-D-ribose 5-phosphate + D-glyceraldehyde 3-phosphate + L-glutamine = pyridoxal 5'-phosphate + L-glutamate + phosphate + 3 H2O + H(+). The protein operates within cofactor biosynthesis; pyridoxal 5'-phosphate biosynthesis. In terms of biological role, catalyzes the formation of pyridoxal 5'-phosphate from ribose 5-phosphate (RBP), glyceraldehyde 3-phosphate (G3P) and ammonia. The ammonia is provided by the PdxT subunit. Can also use ribulose 5-phosphate and dihydroxyacetone phosphate as substrates, resulting from enzyme-catalyzed isomerization of RBP and G3P, respectively. In Staphylococcus aureus (strain Mu3 / ATCC 700698), this protein is Pyridoxal 5'-phosphate synthase subunit PdxS.